The primary structure comprises 256 residues: Hemin import ATP-binding protein HmuV (256 aa).

The ABC transporter domain occupies 2–238 (ISAQNLVYSL…QELTMLYGAD (237 aa)). 34–41 (GPNGAGKS) lines the ATP pocket.

The protein belongs to the ABC transporter superfamily. Heme (hemin) importer (TC 3.A.1.14.5) family. The complex is composed of two ATP-binding proteins (HmuV), two transmembrane proteins (HmuU) and a solute-binding protein (HmuT).

The protein localises to the cell inner membrane. Part of the ABC transporter complex HmuTUV involved in hemin import. Responsible for energy coupling to the transport system. In Shigella dysenteriae, this protein is Hemin import ATP-binding protein HmuV.